Consider the following 448-residue polypeptide: MGKYFGTDGVRGVANSELTPELAFKVGRFGGYVLTKDKQRPKVLIGRDTRISGHMLEGALVAGLLSIGAEVMRLGVISTPGVSYLTKAMDAEAGVMISASHNPVQDNGIKFFGGDGFKLSDEQEAEIERLMDEPEDKLPRPTGADLGLVNDYFEGVQKYLQFLKQTADEDFTGIHVALDCAHGATSSIATHLFADLDADVSTMGTSPNGLNINDGVGSTHPEALSAFVKEKNADIGLAFDGDGDRLIAVDEKGNIVDGDQIMYICAKYLKSEGRLKDDTVVSTVMSNLGFYKALEKEEIKSVQTAVGDRYVVEAMKKDGYNVGGEQSGHLIFLDYNTTGDGLLSAIMLVNTLKASGKTLSELADEMKKFPQLLVNVKVTDKYKVEENAKVKAVISEVEKEMNGDGRILVRPSGTEPLVRVMAEARTKELCDEYVTKIVDVVRTEMGAE.

The Phosphoserine intermediate role is filled by Ser100. Residues Ser100, Asp240, Asp242, and Asp244 each coordinate Mg(2+). At Ser100 the chain carries Phosphoserine.

Belongs to the phosphohexose mutase family. Mg(2+) serves as cofactor. In terms of processing, activated by phosphorylation.

The catalysed reaction is alpha-D-glucosamine 1-phosphate = D-glucosamine 6-phosphate. Catalyzes the conversion of glucosamine-6-phosphate to glucosamine-1-phosphate. The chain is Phosphoglucosamine mutase from Bacillus velezensis (strain DSM 23117 / BGSC 10A6 / LMG 26770 / FZB42) (Bacillus amyloliquefaciens subsp. plantarum).